An 842-amino-acid polypeptide reads, in one-letter code: Protein P (842 aa).

A terminal protein domain (TP) region spans residues 1–177 (MPLSYQHFRR…FCGSPYSWEQ (177 aa)). Residues 178–345 (ELHHGAFLDG…YCLSHLVNLL (168 aa)) are spacer. Positions 186-273 (DGPSRMGEES…AKNIASRSAS (88 aa)) are disordered. The span at 223–239 (GPQSQQRPLDRSQQGRS) shows a compositional bias: polar residues. The segment at 346–689 (EDWGPCTEHG…YLNLYPVARQ (344 aa)) is polymerase/reverse transcriptase domain (RT). One can recognise a Reverse transcriptase domain in the interval 356-599 (RHHIRIPRTP…YSLNFMGYVI (244 aa)). Residues aspartate 428, aspartate 550, and aspartate 551 each contribute to the Mg(2+) site.

Belongs to the hepadnaviridae P protein family.

The catalysed reaction is DNA(n) + a 2'-deoxyribonucleoside 5'-triphosphate = DNA(n+1) + diphosphate. The enzyme catalyses Endonucleolytic cleavage to 5'-phosphomonoester.. Its activity is regulated as follows. Activated by host HSP70 and HSP40 in vitro to be able to bind the epsilon loop of the pgRNA. Because deletion of the RNase H region renders the protein partly chaperone-independent, the chaperones may be needed indirectly to relieve occlusion of the RNA-binding site by this domain. Inhibited by several reverse-transcriptase inhibitors: Lamivudine, Adefovir and Entecavir. In terms of biological role, multifunctional enzyme that converts the viral RNA genome into dsDNA in viral cytoplasmic capsids. This enzyme displays a DNA polymerase activity that can copy either DNA or RNA templates, and a ribonuclease H (RNase H) activity that cleaves the RNA strand of RNA-DNA heteroduplexes in a partially processive 3'- to 5'-endonucleasic mode. Neo-synthesized pregenomic RNA (pgRNA) are encapsidated together with the P protein, and reverse-transcribed inside the nucleocapsid. Initiation of reverse-transcription occurs first by binding the epsilon loop on the pgRNA genome, and is initiated by protein priming, thereby the 5'-end of (-)DNA is covalently linked to P protein. Partial (+)DNA is synthesized from the (-)DNA template and generates the relaxed circular DNA (RC-DNA) genome. After budding and infection, the RC-DNA migrates in the nucleus, and is converted into a plasmid-like covalently closed circular DNA (cccDNA). The activity of P protein does not seem to be necessary for cccDNA generation, and is presumably released from (+)DNA by host nuclear DNA repair machinery. The polypeptide is Protein P (Homo sapiens (Human)).